The following is a 127-amino-acid chain: Fluoride-specific ion channel FluC (127 aa).

4 helical membrane passes run 4–24, 35–55, 71–91, and 103–123; these read LLLAVFIGGGTGSVARWLLSM, LGTLAANLIGAFIIGMGFAWF, TGFCGGLTTFSTFSAEVVFLL, and VFVNLLGSFAMTALAFWLFSA. Gly-75 and Thr-78 together coordinate Na(+).

It belongs to the fluoride channel Fluc/FEX (TC 1.A.43) family.

Its subcellular location is the cell inner membrane. The catalysed reaction is fluoride(in) = fluoride(out). Na(+) is not transported, but it plays an essential structural role and its presence is essential for fluoride channel function. Fluoride-specific ion channel. Important for reducing fluoride concentration in the cell, thus reducing its toxicity. The sequence is that of Fluoride-specific ion channel FluC from Shigella flexneri serotype 5b (strain 8401).